Consider the following 399-residue polypeptide: Probable endo-xylogalacturonan hydrolase A (399 aa).

Residues 1 to 19 form the signal peptide; it reads MTFGKAAFLSFSLFGASWA. PbH1 repeat units lie at residues 177–207, 208–229, 231–251, 260–283, and 293–314; these read TTNA…DIGE, STYV…AFKP, CNYL…SVGS, VQNV…KTYP, and VTNV…QIQS. The active-site Proton donor is the Asp222. The active site involves His245. N-linked (GlcNAc...) asparagine glycans are attached at residues Asn295 and Asn382.

Belongs to the glycosyl hydrolase 28 family.

It is found in the secreted. Its function is as follows. Pectinolytic enzyme involved in the degradation of xylogalacturonan (xga), a galacturonan backbone heavily substituted with xylose, and which is one important component of the hairy regions of pectin. Activity requires a galacturonic acid backbone substituted with xylose. The chain is Probable endo-xylogalacturonan hydrolase A (xghA) from Emericella nidulans (strain FGSC A4 / ATCC 38163 / CBS 112.46 / NRRL 194 / M139) (Aspergillus nidulans).